Consider the following 192-residue polypeptide: Orotate phosphoribosyltransferase 2 (192 aa).

5-phospho-alpha-D-ribose 1-diphosphate is bound at residue 116-124; it reads EDIVTTGLS. Thr-120 and Arg-148 together coordinate orotate.

It belongs to the purine/pyrimidine phosphoribosyltransferase family. PyrE subfamily. Homodimer. It depends on Mg(2+) as a cofactor.

It carries out the reaction orotidine 5'-phosphate + diphosphate = orotate + 5-phospho-alpha-D-ribose 1-diphosphate. Its pathway is pyrimidine metabolism; UMP biosynthesis via de novo pathway; UMP from orotate: step 1/2. Catalyzes the transfer of a ribosyl phosphate group from 5-phosphoribose 1-diphosphate to orotate, leading to the formation of orotidine monophosphate (OMP). This is Orotate phosphoribosyltransferase 2 from Mesorhizobium japonicum (strain LMG 29417 / CECT 9101 / MAFF 303099) (Mesorhizobium loti (strain MAFF 303099)).